The following is a 240-amino-acid chain: Probable ATP synthase 24 kDa subunit, mitochondrial (240 aa).

The N-terminal 32 residues, 1-32 (MAYASRFLSRSKQLQGGLVILQQQHAIPVRAF), are a transit peptide targeting the mitochondrion. 2 stretches are compositionally biased toward basic and acidic residues: residues 210–222 (AVEA…KKEE) and 229–240 (PDVKSLDIRNFI). Positions 210–240 (AVEAMESQKKKEEFQDEEMPDVKSLDIRNFI) are disordered.

The protein resides in the mitochondrion. Its subcellular location is the mitochondrion inner membrane. In terms of biological role, mitochondrial membrane ATP synthase (F(1)F(0) ATP synthase or Complex V) produces ATP from ADP in the presence of a proton gradient across the membrane which is generated by electron transport complexes of the respiratory chain. F-type ATPases consist of two structural domains, F(1) - containing the extramembraneous catalytic core and F(0) - containing the membrane proton channel, linked together by a central stalk and a peripheral stalk. During catalysis, ATP synthesis in the catalytic domain of F(1) is coupled via a rotary mechanism of the central stalk subunits to proton translocation. Part of the complex F(0) domain. The polypeptide is Probable ATP synthase 24 kDa subunit, mitochondrial (Arabidopsis thaliana (Mouse-ear cress)).